Consider the following 247-residue polypeptide: 6-carboxyhexanoate--CoA ligase (247 aa).

This sequence belongs to the BioW family. In terms of assembly, homodimer. Mg(2+) is required as a cofactor.

It carries out the reaction heptanedioate + ATP + CoA = 6-carboxyhexanoyl-CoA + AMP + diphosphate. It participates in metabolic intermediate metabolism; pimeloyl-CoA biosynthesis; pimeloyl-CoA from pimelate: step 1/1. Catalyzes the transformation of pimelate into pimeloyl-CoA with concomitant hydrolysis of ATP to AMP. This is 6-carboxyhexanoate--CoA ligase from Persephonella marina (strain DSM 14350 / EX-H1).